The chain runs to 33 residues: Tail virion protein G7P (33 aa).

The helical transmembrane segment at 10–30 (IYQAMIQISVVLCFALGIIAG) threads the bilayer.

This sequence belongs to the inovirus G7P protein family.

Its subcellular location is the virion. The protein resides in the host membrane. Functionally, may initiate with G9P the virion concomitant assembly-budding process, by interacting with the packaging signal of the viral genome. The assembly-budding takes place at the host inner membrane. In turn, G7P and G9P are present at the end of the filamentous virion that emerges first from the bacterial host. The polypeptide is Tail virion protein G7P (VII) (Escherichia coli (Bacteriophage f1)).